The primary structure comprises 208 residues: Large ribosomal subunit protein uL4 (208 aa).

The segment at 54 to 78 is disordered; the sequence is RAEVSHTTKKPWNQKGTGRARAGMS.

Belongs to the universal ribosomal protein uL4 family. As to quaternary structure, part of the 50S ribosomal subunit.

Its function is as follows. One of the primary rRNA binding proteins, this protein initially binds near the 5'-end of the 23S rRNA. It is important during the early stages of 50S assembly. It makes multiple contacts with different domains of the 23S rRNA in the assembled 50S subunit and ribosome. Functionally, forms part of the polypeptide exit tunnel. In Methylobacillus flagellatus (strain ATCC 51484 / DSM 6875 / VKM B-1610 / KT), this protein is Large ribosomal subunit protein uL4.